Reading from the N-terminus, the 382-residue chain is uncharacterized protein (382 aa).

12 helical membrane passes run 14-34, 45-65, 79-99, 102-122, 131-151, 157-177, 204-224, 235-255, 270-290, 291-311, 325-345, and 348-368; these read GLLL…LWLA, VVSS…GYVI, FIFA…SWLA, FVAG…LMCS, LLAA…LLVS, LMSV…PLLF, LGVN…GLMP, ASIG…QWPI, VQVF…AMAP, ALFI…AWAC, ALLL…AMLM, and FSDN…LLML.

The protein belongs to the major facilitator superfamily. YcaD (TC 2.A.1.26) family.

Its subcellular location is the cell inner membrane. This is an uncharacterized protein from Escherichia coli O6:K15:H31 (strain 536 / UPEC).